Consider the following 592-residue polypeptide: Zinc metalloproteinase dpy-31 (592 aa).

Positions 1–18 (MHKIFIIFGLLSLCAAHS) are cleaved as a signal peptide. The propeptide occupies 19–127 (LRDLSNKDEE…TEGKTRVKRK (109 aa)). The interval 22-46 (LSNKDEEDPPSSAPGVRKRRMMSEE) is disordered. The Peptidase M12A domain maps to 127-326 (KFIGSNLRRW…IRLMNKIYCS (200 aa)). Residue Asn-167 is glycosylated (N-linked (GlcNAc...) asparagine). Disulfide bonds link Cys-170–Cys-325 and Cys-193–Cys-214. Position 222 (His-222) interacts with Zn(2+). Residue Glu-223 is part of the active site. Residues His-226 and His-232 each contribute to the Zn(2+) site. The 13-residue stretch at 349–361 (CRCPDGFTGQYCE) folds into the EGF-like domain. A disulfide bond links Cys-371 and Cys-399. The CUB domain maps to 371–487 (CGGKISLTRS…KGFEARARAV (117 aa)). A glycan (N-linked (GlcNAc...) asparagine) is linked at Asn-438. The region spanning 490 to 540 (AGNWNSWSPWTACSATCGACGSRMRTRTCPPGNACSGEPVETQICNTQACT) is the TSP type-1 domain. Intrachain disulfides connect Cys-502/Cys-534, Cys-506/Cys-539, and Cys-518/Cys-524.

It depends on Zn(2+) as a cofactor. As to expression, expressed in hypodermis, rectal and vulval epithelial cells and amphid socket cells.

Its subcellular location is the secreted. Metalloprotease which cleaves the carboxyl terminus of procollagens, such as sqt-3, to mature collagens. Involved in cuticular collagen maturation. The sequence is that of Zinc metalloproteinase dpy-31 from Caenorhabditis elegans.